The primary structure comprises 793 residues: Translocase of chloroplast 90, chloroplastic (793 aa).

Residues 22–59 (LGSDPFFRDPHQEQDNHSQAPAAPQPVTLSEPPCSTSS) form a disordered region. Residues 27–37 (FFRDPHQEQDN) show a composition bias toward basic and acidic residues. Residues 130–157 (LIRAEESELKNVKLRQDRAKALAREQES) adopt a coiled-coil conformation. The 231-residue stretch at 164 to 394 (DFSLRILVLG…FRDSIGLGQP (231 aa)) folds into the AIG1-type G domain. Residues 173 to 180 (GKTGVGKS) are G1. Residues 176–181 (GVGKSA) and 195–200 (DAFRPG) each bind GTP. Mg(2+) is bound at residue serine 180. The interval 195–198 (DAFR) is homodimerization. The segment at 199-203 (PGTDR) is G2. The interval 220-223 (DTPG) is G3. Residues 259–264 (RLDMID) form a homodimerization region. The chain crosses the membrane as a helical span at residues 279–297 (IFGAAIWLNTILVMTHSAA). Positions 293 to 296 (THSA) are G4. GTP contacts are provided by residues histidine 294 and 341–342 (EN). The segment at 341-343 (ENH) is G5. Coiled coils occupy residues 410-442 (LRRR…YDQL) and 477-503 (KKQL…DTEQ).

Belongs to the TRAFAC class TrmE-Era-EngA-EngB-Septin-like GTPase superfamily. AIG1/Toc34/Toc159-like paraseptin GTPase family. TOC159 subfamily. As to quaternary structure, homodimer. Part of the TOC core complex that includes 1 protein for the specific recognition of transit peptides surrounded by a ring composed of four proteins forming translocation channels, and four to five GTP-binding proteins providing energy. This core complex can interact with components of the TIC complex to form a larger import complex. Chloroplastic protein precursor such as prSS (precursor of the RuBisCO small subunit) interacts with these complexes. The TOC complex contains a specific subset of polar lipids such as digalactosyldiacylglyceride (DGDG), phosphatidylcholine (PC) and phosphatidylglycerol (PG). Interacts with TOC33 and TOC75. Requires Mg(2+) as cofactor. Expressed in seedlings, leaves, flowers, and roots.

It is found in the plastid. Its subcellular location is the chloroplast outer membrane. The protein localises to the cytoplasm. GTPase involved in protein precursor import into chloroplasts. Seems to recognize chloroplast-destined precursor proteins and regulate their presentation to the translocation channel through GTP hydrolysis. Probably specialized in the import of nuclear encoded photosynthetic preproteins from the cytoplasm to the chloroplast. The polypeptide is Translocase of chloroplast 90, chloroplastic (TOC90) (Arabidopsis thaliana (Mouse-ear cress)).